The sequence spans 795 residues: Mitochondrial intermediate peptidase (795 aa).

The N-terminal 22 residues, 1-22, are a transit peptide targeting the mitochondrion; it reads MLKTLNRRSWTCRQCIRILRRN. Position 561 (histidine 561) interacts with Zn(2+). The active site involves glutamate 562. Zn(2+) is bound by residues histidine 565 and histidine 568.

The protein belongs to the peptidase M3 family. Requires Zn(2+) as cofactor.

Its subcellular location is the mitochondrion matrix. The catalysed reaction is Release of an N-terminal octapeptide as second stage of processing of some proteins imported into the mitochondrion.. In terms of biological role, cleaves proteins, imported into the mitochondrion, to their mature size. While most mitochondrial precursor proteins are processed to the mature form in one step by mitochondrial processing peptidase (MPP), the sequential cleavage by MIP of an octapeptide after initial processing by MPP is a required step for a subgroup of nuclear-encoded precursor proteins destined for the matrix or the inner membrane. In Coccidioides immitis (strain RS) (Valley fever fungus), this protein is Mitochondrial intermediate peptidase (OCT1).